The primary structure comprises 477 residues: FAD-dependent monooxygenase paxM (477 aa).

Residues 4 to 24 form a helical membrane-spanning segment; the sequence is AEFQVIIVGGSIGGLTLAHCL. 3 residues coordinate FAD: Glu35, Gly49, and Arg108. Arg195 is an active-site residue. Asp308 and Ala321 together coordinate FAD. The helical transmembrane segment at 446–466 threads the bilayer; it reads LMIYLFGLTIVYTSLTMMFDL.

It belongs to the paxM FAD-dependent monooxygenase family. It depends on FAD as a cofactor.

Its subcellular location is the membrane. It functions in the pathway secondary metabolite biosynthesis. In terms of biological role, FAD-dependent monooxygenase; part of the gene cluster that mediates the biosynthesis of paxilline, a mycotoxin that acts as an inhibitor of mammalian maxi-K channels. PaxG, the geranylgeranyl diphosphate (GGPP) synthase is proposed to catalyze the first step in paxilline biosynthesis. Condensation of indole-3-glycerol phosphate with GGPP by paxC then forms 3-geranylgeranylindole (3-GGI), followed by epoxidation and cyclization of this intermediate (by paxM and paxB) to form paspaline. Paspaline is subsequently converted to 13-desoxypaxilline by paxP, the latter being then converted to paxilline by paxQ. Finally paxilline can be mono- and di-prenylated by paxD. The chain is FAD-dependent monooxygenase paxM from Penicillium paxilli.